The sequence spans 264 residues: Probable septum site-determining protein MinC (264 aa).

The interval 103–147 (SHGRRPRGGNDAKDADRNDAQDAQGAPEHAQAAEAPASTSAIPPA) is disordered. Basic and acidic residues predominate over residues 110-122 (GGNDAKDADRNDA). Residues 124–147 (DAQGAPEHAQAAEAPASTSAIPPA) are compositionally biased toward low complexity.

This sequence belongs to the MinC family. Interacts with MinD and FtsZ.

Its function is as follows. Cell division inhibitor that blocks the formation of polar Z ring septums. Rapidly oscillates between the poles of the cell to destabilize FtsZ filaments that have formed before they mature into polar Z rings. Prevents FtsZ polymerization. This Ralstonia pickettii (strain 12J) protein is Probable septum site-determining protein MinC.